The primary structure comprises 172 residues: Bcl-2-related protein A1 (172 aa).

A BH1 motif is present at residues 77 to 97 (KEFEDGIINWGRIVTIFAFGG). Positions 132-147 (EWIRQNGGWEDGFIKK) match the BH2 motif.

It belongs to the Bcl-2 family. Interacts directly with BCL2L11/BIM and PMAIP1. Interacts directly with BAK1, BID, BMF and BBC3. Interacts with BOP. Interacts with isoform 3, isoform 4 and isoform 5 of ING4. Interacts with UBQLN4. Expressed in hemopoietic tissues, including bone marrow, spleen and thymus.

It is found in the cytoplasm. Functionally, retards apoptosis induced by IL-3 deprivation. May function in the response of hemopoietic cells to external signals and in maintaining endothelial survival during infection. Can inhibit apoptosis induced by serum starvation in the mammary epithelial cell line HC11. The protein is Bcl-2-related protein A1 (Bcl2a1) of Mus musculus (Mouse).